A 234-amino-acid chain; its full sequence is Uridylate kinase (234 aa).

9-12 (KLSG) provides a ligand contact to ATP. Gly51 serves as a coordination point for UMP. ATP is bound by residues Gly52 and Arg56. Residues Asp71 and 132–139 (CGNPFFTT) each bind UMP. ATP-binding residues include Thr159, Tyr165, and Asp168.

Belongs to the UMP kinase family. As to quaternary structure, homohexamer.

Its subcellular location is the cytoplasm. The enzyme catalyses UMP + ATP = UDP + ADP. The protein operates within pyrimidine metabolism; CTP biosynthesis via de novo pathway; UDP from UMP (UMPK route): step 1/1. Its activity is regulated as follows. Inhibited by UTP. In terms of biological role, catalyzes the reversible phosphorylation of UMP to UDP. The polypeptide is Uridylate kinase (Prochlorococcus marinus (strain MIT 9215)).